The following is a 368-amino-acid chain: Peptide chain release factor 2 (368 aa).

Gln-251 is modified (N5-methylglutamine).

This sequence belongs to the prokaryotic/mitochondrial release factor family. In terms of processing, methylated by PrmC. Methylation increases the termination efficiency of RF2.

Its subcellular location is the cytoplasm. In terms of biological role, peptide chain release factor 2 directs the termination of translation in response to the peptide chain termination codons UGA and UAA. This is Peptide chain release factor 2 from Streptomyces avermitilis (strain ATCC 31267 / DSM 46492 / JCM 5070 / NBRC 14893 / NCIMB 12804 / NRRL 8165 / MA-4680).